An 83-amino-acid chain; its full sequence is Small ribosomal subunit protein uS17 (83 aa).

The protein belongs to the universal ribosomal protein uS17 family. In terms of assembly, part of the 30S ribosomal subunit.

Functionally, one of the primary rRNA binding proteins, it binds specifically to the 5'-end of 16S ribosomal RNA. This Zymomonas mobilis subsp. mobilis (strain ATCC 31821 / ZM4 / CP4) protein is Small ribosomal subunit protein uS17.